A 211-amino-acid chain; its full sequence is Large ribosomal subunit protein uL4 (211 aa).

A disordered region spans residues Glu44–Phe90. The segment covering Gly60–Lys72 has biased composition (basic residues).

This sequence belongs to the universal ribosomal protein uL4 family. As to quaternary structure, part of the 50S ribosomal subunit.

In terms of biological role, one of the primary rRNA binding proteins, this protein initially binds near the 5'-end of the 23S rRNA. It is important during the early stages of 50S assembly. It makes multiple contacts with different domains of the 23S rRNA in the assembled 50S subunit and ribosome. Functionally, forms part of the polypeptide exit tunnel. In Ureaplasma parvum serovar 3 (strain ATCC 27815 / 27 / NCTC 11736), this protein is Large ribosomal subunit protein uL4.